The sequence spans 388 residues: Succinate--CoA ligase [ADP-forming] subunit beta (388 aa).

The region spanning 9–244 (KQLFARYGLP…PSQEDPREAQ (236 aa)) is the ATP-grasp domain. ATP is bound by residues lysine 46, 53–55 (GRG), glutamate 99, threonine 102, and glutamate 107. Residues asparagine 199 and aspartate 213 each coordinate Mg(2+). Residues asparagine 264 and 321 to 323 (GIV) each bind substrate.

The protein belongs to the succinate/malate CoA ligase beta subunit family. In terms of assembly, heterotetramer of two alpha and two beta subunits. The cofactor is Mg(2+).

It catalyses the reaction succinate + ATP + CoA = succinyl-CoA + ADP + phosphate. The enzyme catalyses GTP + succinate + CoA = succinyl-CoA + GDP + phosphate. It participates in carbohydrate metabolism; tricarboxylic acid cycle; succinate from succinyl-CoA (ligase route): step 1/1. In terms of biological role, succinyl-CoA synthetase functions in the citric acid cycle (TCA), coupling the hydrolysis of succinyl-CoA to the synthesis of either ATP or GTP and thus represents the only step of substrate-level phosphorylation in the TCA. The beta subunit provides nucleotide specificity of the enzyme and binds the substrate succinate, while the binding sites for coenzyme A and phosphate are found in the alpha subunit. This is Succinate--CoA ligase [ADP-forming] subunit beta from Photorhabdus laumondii subsp. laumondii (strain DSM 15139 / CIP 105565 / TT01) (Photorhabdus luminescens subsp. laumondii).